The sequence spans 571 residues: Septation ring formation regulator EzrA (571 aa).

The Extracellular segment spans residues 1–3 (MYY). A helical membrane pass occupies residues 4–22 (MLIGFIIVVIAVIGAGYIL). The Cytoplasmic portion of the chain corresponds to 23–571 (KRKHYQRINE…ESKVSVDDIE (549 aa)). 4 coiled-coil regions span residues 248-298 (LAQM…DTLE), 326-374 (DALA…ASGE), 400-437 (KFAEELRSLRKDELEARDDAERMRRAIITLDRKMERER), and 478-529 (RIAE…ENHF).

The protein belongs to the EzrA family.

Its subcellular location is the cell membrane. Functionally, negative regulator of FtsZ ring formation; modulates the frequency and position of FtsZ ring formation. Inhibits FtsZ ring formation at polar sites. Interacts either with FtsZ or with one of its binding partners to promote depolymerization. The sequence is that of Septation ring formation regulator EzrA from Listeria monocytogenes serovar 1/2a (strain ATCC BAA-679 / EGD-e).